We begin with the raw amino-acid sequence, 226 residues long: Transcription factor bHLH115 (226 aa).

In terms of domain architecture, bHLH spans 66–117 (TGSNSKACREKQRRDRLNDKFTELSSVLEPGRTPKTDKVAIINDAIRMVNQA).

In terms of assembly, homodimer. Interacts with BTS and BHLH47/PYE.

It localises to the nucleus. In Arabidopsis thaliana (Mouse-ear cress), this protein is Transcription factor bHLH115 (BHLH115).